Consider the following 267-residue polypeptide: MARGPKKHLKRLAAPNHWMLDKLSGKWAPRPSSGPHKLRECLPLILVLRNRLKYALTKKEVTLILMQRLVKVDGKVRTDPNYPAGFMDVISIEKTKENFRLLFDPKGRFTLQRITPEEAKFKLARVTRVETGNQGIPYVHTDDGRTIRYPDPAISIHDTIKIDIESGKITAFIPFEVNNLCMIVGGHNLGRVGAVTHREKHPGSFDIVHVTDTAGHQFATRLSNVFIIGKASQTFVSLPAGKGVRRSRVDERNAALKRRGEKIETVA.

One can recognise an S4 RNA-binding domain in the interval 42–104; it reads LPLILVLRNR…TKENFRLLFD (63 aa).

This sequence belongs to the eukaryotic ribosomal protein eS4 family.

It localises to the cytoplasm. In Dictyostelium discoideum (Social amoeba), this protein is Small ribosomal subunit protein eS4 (rps4).